The primary structure comprises 193 residues: Cerebellin-1 (193 aa).

A signal peptide spans Met-1–Gly-21. Asn-23 is a glycosylation site (N-linked (GlcNAc...) asparagine). The segment at Cys-34–Cys-38 is essential for interaction with NRXN1 and linker of two C1q trimers into disulfide-linked hexamers. Residues Ser-57–Leu-193 enclose the C1q domain. The necessary for interaction with CBLN3, and homotrimerization stretch occupies residues Val-62–Leu-193. Asn-79 carries N-linked (GlcNAc...) asparagine glycosylation. Residues Tyr-122–Asp-147 form an essential for interaction with GRID2 region.

Homohexamer; disulfide-linked homotrimers. The trimers are assembled via the globular C1q domains. The trimers associate via N-terminal cysteine residues to form disulfide-linked hexamers. May form oligomers with CBLN2, CBLN3 and CBLN4 prior to secretion. Once secreted, does not interact with other CBLN family members. Interacts with GRID1. Interacts with NRXN1 and NRXN2 long (alpha) and short (beta) isoforms produced by alternative promoter usage. Competes with NLGN1 for NRXN1-binding. Weakly interacts with NRXN3 short isoform and not at all with NRXN3 long isoform. Interacts (via C1q domain) with GRID2; GRID2-binding is calcium-independent; CBLN1 hexamers anchor GRID2 N-terminal domain dimers to monomeric NRXN1 isoform beta; promotes synaptogenesis and mediates the D-Serine-dependent long term depression signals and AMPA receptor endocytosis. In terms of processing, the proteolytic processing to yield cerebellin seems to occur either prior to the secretion by presynaptic neurons and subsequent oligomerization or in some other location after release of the mature protein. Post-translationally, sialoglycoprotein.

Its subcellular location is the secreted. The protein resides in the postsynaptic cell membrane. Functionally, required for synapse integrity and synaptic plasticity. During cerebellar synapse formation, essential for the matching and maintenance of pre- and post-synaptic elements at parallel fiber-Purkinje cell synapses, the establishment of the proper pattern of climbing fiber-Purkinje cell innervation, and induction of long-term depression at parallel fiber-Purkinje cell synapses. Plays a role as a synaptic organizer that acts bidirectionally on both pre- and post-synaptic components. On the one hand induces accumulation of synaptic vesicles in the pre-synaptic part by binding with NRXN1 and in other hand induces clustering of GRID2 and its associated proteins at the post-synaptic site through association of GRID2. NRXN1-CBLN1-GRID2 complex directly induces parallel fiber protrusions that encapsulate spines of Purkinje cells leading to accumulation of GRID2 and synaptic vesicles. Required for CBLN3 export from the endoplasmic reticulum and secretion. NRXN1-CBLN1-GRID2 complex mediates the D-Serine-dependent long term depression signals and AMPA receptor endocytosis. Essential for long-term maintenance but not establishment of excitatory synapses. Inhibits the formation and function of inhibitory GABAergic synapses in cerebellar Purkinje cells. Its function is as follows. The cerebellin peptide exerts neuromodulatory functions. Directly stimulates norepinephrine release via the adenylate cyclase/PKA-dependent signaling pathway; and indirectly enhances adrenocortical secretion in vivo, through a paracrine mechanism involving medullary catecholamine release. This Bos taurus (Bovine) protein is Cerebellin-1.